Here is a 346-residue protein sequence, read N- to C-terminus: Serine/threonine-protein phosphatase PP1(5.9) (346 aa).

The Mn(2+) site is built by D102, H104, D130, and N162. H163 acts as the Proton donor in catalysis. The Mn(2+) site is built by H211 and H287.

It belongs to the PPP phosphatase family. PP-1 subfamily. It depends on Mn(2+) as a cofactor.

It catalyses the reaction O-phospho-L-seryl-[protein] + H2O = L-seryl-[protein] + phosphate. It carries out the reaction O-phospho-L-threonyl-[protein] + H2O = L-threonyl-[protein] + phosphate. This chain is Serine/threonine-protein phosphatase PP1(5.9), found in Trypanosoma brucei brucei.